A 376-amino-acid polypeptide reads, in one-letter code: Bifunctional enzyme IspD/IspF (376 aa).

Positions M1 to R220 are 2-C-methyl-D-erythritol 4-phosphate cytidylyltransferase. Residues R220–A376 are 2-C-methyl-D-erythritol 2,4-cyclodiphosphate synthase. A divalent metal cation-binding residues include D226 and H228. 4-CDP-2-C-methyl-D-erythritol 2-phosphate contacts are provided by residues D226–H228 and H252–S253. H260 contacts a divalent metal cation. 4-CDP-2-C-methyl-D-erythritol 2-phosphate contacts are provided by residues D274–G276, T350–E353, F357, and R360.

The protein in the N-terminal section; belongs to the IspD/TarI cytidylyltransferase family. IspD subfamily. This sequence in the C-terminal section; belongs to the IspF family. A divalent metal cation serves as cofactor.

It carries out the reaction 2-C-methyl-D-erythritol 4-phosphate + CTP + H(+) = 4-CDP-2-C-methyl-D-erythritol + diphosphate. The enzyme catalyses 4-CDP-2-C-methyl-D-erythritol 2-phosphate = 2-C-methyl-D-erythritol 2,4-cyclic diphosphate + CMP. The protein operates within isoprenoid biosynthesis; isopentenyl diphosphate biosynthesis via DXP pathway; isopentenyl diphosphate from 1-deoxy-D-xylulose 5-phosphate: step 2/6. Its pathway is isoprenoid biosynthesis; isopentenyl diphosphate biosynthesis via DXP pathway; isopentenyl diphosphate from 1-deoxy-D-xylulose 5-phosphate: step 4/6. Its function is as follows. Bifunctional enzyme that catalyzes the formation of 4-diphosphocytidyl-2-C-methyl-D-erythritol from CTP and 2-C-methyl-D-erythritol 4-phosphate (MEP) (IspD), and catalyzes the conversion of 4-diphosphocytidyl-2-C-methyl-D-erythritol 2-phosphate (CDP-ME2P) to 2-C-methyl-D-erythritol 2,4-cyclodiphosphate (ME-CPP) with a corresponding release of cytidine 5-monophosphate (CMP) (IspF). The protein is Bifunctional enzyme IspD/IspF of Granulibacter bethesdensis (strain ATCC BAA-1260 / CGDNIH1).